The primary structure comprises 155 residues: Endoribonuclease YbeY (155 aa).

The Zn(2+) site is built by H116, H120, and H126.

This sequence belongs to the endoribonuclease YbeY family. The cofactor is Zn(2+).

The protein localises to the cytoplasm. Its function is as follows. Single strand-specific metallo-endoribonuclease involved in late-stage 70S ribosome quality control and in maturation of the 3' terminus of the 16S rRNA. This is Endoribonuclease YbeY from Thermobifida fusca (strain YX).